The chain runs to 627 residues: (R)-linalool synthase, chloroplastic (627 aa).

A chloroplast-targeting transit peptide spans 1 to 21 (MAFVSIAPLASRCCVHKSFVS). Residues aspartate 378, aspartate 382, and glutamate 530 each coordinate Mg(2+). Positions 378 to 382 (DDIYD) match the DDXXD motif motif.

The protein belongs to the terpene synthase family. Tpsd subfamily. The cofactor is Mg(2+). Mn(2+) is required as a cofactor.

It localises to the plastid. The protein resides in the chloroplast. It catalyses the reaction (2E)-geranyl diphosphate + H2O = (R)-linalool + diphosphate. It participates in terpene metabolism; oleoresin biosynthesis. Terpene synthase (TPS) involved in the biosynthesis of monoterpene natural products included in conifer oleoresin secretions and volatile emissions; these compounds contribute to biotic and abiotic stress defense against herbivores and pathogens. Catalyzes the conversion of (2E)-geranyl diphosphate (GPP) to (R)-linalool. The sequence is that of (R)-linalool synthase, chloroplastic from Picea glauca (White spruce).